The following is a 202-amino-acid chain: Small heat shock protein hspG5 (202 aa).

The 172-residue stretch at 31–202 (KTIIDIIPPM…YSNTIKININ (172 aa)) folds into the sHSP domain. The tract at residues 96 to 138 (TSSTTLDSKEDEASIEEFEDDIKPKSKSTVTTTATKENKEDEN) is disordered.

It belongs to the small heat shock protein (HSP20) family.

This chain is Small heat shock protein hspG5 (hspG5), found in Dictyostelium discoideum (Social amoeba).